The chain runs to 56 residues: Protein hunchback (56 aa).

3 consecutive C2H2-type zinc fingers follow at residues histidine 1–histidine 5, histidine 11–histidine 33, and tyrosine 39–leucine 56.

It belongs to the hunchback C2H2-type zinc-finger protein family.

The protein localises to the nucleus. Gap class segmentation protein that controls development of head structures. The chain is Protein hunchback (hb) from Bithynia tentaculata (Spire snail).